The following is a 76-amino-acid chain: Small ribosomal subunit protein bS18 (76 aa).

It belongs to the bacterial ribosomal protein bS18 family. In terms of assembly, part of the 30S ribosomal subunit. Forms a tight heterodimer with protein bS6.

In terms of biological role, binds as a heterodimer with protein bS6 to the central domain of the 16S rRNA, where it helps stabilize the platform of the 30S subunit. In Xylella fastidiosa (strain 9a5c), this protein is Small ribosomal subunit protein bS18.